The primary structure comprises 351 residues: Anthranilate phosphoribosyltransferase (351 aa).

Residues glycine 85, 88 to 89 (GD), serine 93, 95 to 98 (NIST), 113 to 121 (KHGNRAASS), and threonine 125 contribute to the 5-phospho-alpha-D-ribose 1-diphosphate site. Glycine 85 is an anthranilate binding site. Position 97 (serine 97) interacts with Mg(2+). Asparagine 116 contacts anthranilate. Position 171 (arginine 171) interacts with anthranilate. Mg(2+) contacts are provided by aspartate 229 and glutamate 230.

The protein belongs to the anthranilate phosphoribosyltransferase family. As to quaternary structure, homodimer. Requires Mg(2+) as cofactor.

It catalyses the reaction N-(5-phospho-beta-D-ribosyl)anthranilate + diphosphate = 5-phospho-alpha-D-ribose 1-diphosphate + anthranilate. It participates in amino-acid biosynthesis; L-tryptophan biosynthesis; L-tryptophan from chorismate: step 2/5. Functionally, catalyzes the transfer of the phosphoribosyl group of 5-phosphorylribose-1-pyrophosphate (PRPP) to anthranilate to yield N-(5'-phosphoribosyl)-anthranilate (PRA). The protein is Anthranilate phosphoribosyltransferase of Saccharopolyspora erythraea (strain ATCC 11635 / DSM 40517 / JCM 4748 / NBRC 13426 / NCIMB 8594 / NRRL 2338).